Reading from the N-terminus, the 833-residue chain is Serine/threonine-protein phosphatase 4 regulatory subunit 3A (833 aa).

Positions 1 to 100 (MTDTRRRVKV…DEIWEKICQV (100 aa)) constitute a WH1 domain. Phosphoserine occurs at positions 117 and 127. N6-acetyllysine is present on Lys655. Over residues 683–694 (FNTDEDDMEDGE) the composition is skewed to acidic residues. 2 disordered regions span residues 683–712 (FNTD…IMDP) and 733–833 (KTNL…KFDS). Residues Ser698, Ser741, Ser768, Ser771, Ser774, Ser777, and Ser780 each carry the phosphoserine modification. Positions 734–751 (TNLSGRQSPSFKLSLSSG) are enriched in polar residues. The segment covering 752-768 (TKTNLTSQSSTTNLPGS) has biased composition (low complexity). The segment covering 785-794 (PKNTSQTAAI) has biased composition (polar residues). Acidic residues predominate over residues 806–820 (YPDDDEDDDEDEDKE).

This sequence belongs to the SMEK family. In terms of assembly, serine/threonine-protein phosphatase 4 (PP4) occurs in different assemblies of the catalytic and one or more regulatory subunits. Component of the PP4 complex PPP4C-PPP4R2-PPP4R3A. Interacts with PPP4C; the interaction requires PPP4R2.

It localises to the cytoplasm. Its subcellular location is the cytoskeleton. It is found in the microtubule organizing center. The protein localises to the centrosome. The protein resides in the nucleus. Its function is as follows. Regulatory subunit of serine/threonine-protein phosphatase 4. May regulate the activity of PPP4C at centrosomal microtubule organizing centers. The PPP4C-PPP4R2-PPP4R3A PP4 complex specifically dephosphorylates H2AX phosphorylated on 'Ser-140' (gamma-H2AX) generated during DNA replication and required for DNA DSB repair. The sequence is that of Serine/threonine-protein phosphatase 4 regulatory subunit 3A from Homo sapiens (Human).